The primary structure comprises 159 residues: Phosphopantetheine adenylyltransferase (159 aa).

Position 10 (T10) interacts with substrate. ATP contacts are provided by residues 10–11 (TF) and H18. The substrate site is built by K42, M74, and R88. ATP-binding positions include 89 to 91 (GLR), E99, and 124 to 130 (WSFISSS).

Belongs to the bacterial CoaD family. In terms of assembly, homohexamer. The cofactor is Mg(2+).

Its subcellular location is the cytoplasm. It carries out the reaction (R)-4'-phosphopantetheine + ATP + H(+) = 3'-dephospho-CoA + diphosphate. It participates in cofactor biosynthesis; coenzyme A biosynthesis; CoA from (R)-pantothenate: step 4/5. Reversibly transfers an adenylyl group from ATP to 4'-phosphopantetheine, yielding dephospho-CoA (dPCoA) and pyrophosphate. The polypeptide is Phosphopantetheine adenylyltransferase (Pectobacterium carotovorum subsp. carotovorum (strain PC1)).